A 512-amino-acid chain; its full sequence is MQNLLSIITFLPLAAAAVLAVVSRGSGPAADRNAKWVALTATVVTFLVSLLLLAGFDPANPGMQFVEDRAWIMGLHYKLGVDGISILFVMLTTFLMPLTIASAWHVETRVKEYMIAFLVLEALMIGVFVALDLVLFYLFFEAGLIPMFLIIGIWGGKERIYAAFKFFLYTFLGSVLMLVAMVAMYMMAGTTDIVTLMSFDFPHADLPFLGWWTLTGGVQTLLFLAFFASFAVKMPMWPVHTWLPDAHVQAPTAGSVVLAAVLLKMGGYGFLRFSLPMFPVGAETMTTFVFILSAVAIVYTSLVALAQEDMKKLIAYSSVAHMGYVTMGIFAANQQGVDGAIFQMLSHGFISGALFLCVGVIYDRMHTREIAAYGGLVNRMPAYALIFMFFTMANVGLPGTSGFVGEFLTLLGIFQVNTWVALFATSGVILSAAYALWLYRRVVFGELVKESLKTISDMTTREKAIFAPLVAMTLLLGVYPSLVTDLIGPSVAHLVQNYHADLGTLAQATAGN.

The next 14 membrane-spanning stretches (helical) occupy residues 3–23 (NLLS…AVVS), 36–56 (WVAL…LAGF), 84–104 (ISIL…ASAW), 112–132 (EYMI…VALD), 133–153 (LVLF…IIGI), 166–186 (FFLY…AMYM), 208–228 (FLGW…AFFA), 251–271 (PTAG…YGFL), 285–305 (MTTF…LVAL), 313–333 (LIAY…FAAN), 341–361 (IFQM…VGVI), 384–404 (ALIF…SGFV), 419–439 (WVAL…LWLY), and 464–484 (AIFA…SLVT).

The protein belongs to the complex I subunit 4 family.

Its subcellular location is the cell membrane. It carries out the reaction a quinone + NADH + 5 H(+)(in) = a quinol + NAD(+) + 4 H(+)(out). Functionally, NDH-1 shuttles electrons from NADH, via FMN and iron-sulfur (Fe-S) centers, to quinones in the respiratory chain. The immediate electron acceptor for the enzyme in this species is believed to be ubiquinone. Couples the redox reaction to proton translocation (for every two electrons transferred, four hydrogen ions are translocated across the cytoplasmic membrane), and thus conserves the redox energy in a proton gradient. The sequence is that of NADH-quinone oxidoreductase subunit M (nuoM) from Rhodobacter capsulatus (Rhodopseudomonas capsulata).